Reading from the N-terminus, the 242-residue chain is Phosphoribosylaminoimidazole-succinocarboxamide synthase (242 aa).

It belongs to the SAICAR synthetase family.

The enzyme catalyses 5-amino-1-(5-phospho-D-ribosyl)imidazole-4-carboxylate + L-aspartate + ATP = (2S)-2-[5-amino-1-(5-phospho-beta-D-ribosyl)imidazole-4-carboxamido]succinate + ADP + phosphate + 2 H(+). The protein operates within purine metabolism; IMP biosynthesis via de novo pathway; 5-amino-1-(5-phospho-D-ribosyl)imidazole-4-carboxamide from 5-amino-1-(5-phospho-D-ribosyl)imidazole-4-carboxylate: step 1/2. The protein is Phosphoribosylaminoimidazole-succinocarboxamide synthase of Prochlorococcus marinus (strain MIT 9303).